Consider the following 228-residue polypeptide: Glyceraldehyde 3-phosphate phosphatase (228 aa).

Belongs to the HAD-like hydrolase superfamily. The cofactor is Mg(2+).

Its function is as follows. Catalyzes the dephosphorylation of D,L-glyceraldehyde 3-phosphate in vitro. This is Glyceraldehyde 3-phosphate phosphatase from Methanocaldococcus jannaschii (strain ATCC 43067 / DSM 2661 / JAL-1 / JCM 10045 / NBRC 100440) (Methanococcus jannaschii).